Reading from the N-terminus, the 384-residue chain is Glucans biosynthesis protein C (384 aa).

10 consecutive transmembrane segments (helical) span residues 17–37, 54–74, 91–111, 140–160, 173–193, 212–232, 240–260, 274–294, 311–331, and 338–358; these read AWLM…THSW, FIHA…SYML, VGIP…ILLQ, LWFL…FTWF, AISL…YAAI, FIVM…LAFI, FTTP…AYLL, TESV…FSLG, ASLF…AYIT, and LIGF…LYEI.

It belongs to the acyltransferase 3 family. OpgC subfamily.

The protein resides in the cell membrane. The protein operates within glycan metabolism; osmoregulated periplasmic glucan (OPG) biosynthesis. Its function is as follows. Necessary for the succinyl substitution of periplasmic glucans. Could catalyze the transfer of succinyl residues from the cytoplasmic side of the membrane to the nascent glucan backbones on the periplasmic side of the membrane. This Salmonella schwarzengrund (strain CVM19633) protein is Glucans biosynthesis protein C.